Here is a 201-residue protein sequence, read N- to C-terminus: Imidazole glycerol phosphate synthase subunit HisH (201 aa).

A Glutamine amidotransferase type-1 domain is found at 1-201; the sequence is MVFIADYGAG…LKVLANFAEL (201 aa). The active-site Nucleophile is the cysteine 79. Catalysis depends on residues histidine 183 and glutamate 185.

Heterodimer of HisH and HisF.

Its subcellular location is the cytoplasm. It catalyses the reaction 5-[(5-phospho-1-deoxy-D-ribulos-1-ylimino)methylamino]-1-(5-phospho-beta-D-ribosyl)imidazole-4-carboxamide + L-glutamine = D-erythro-1-(imidazol-4-yl)glycerol 3-phosphate + 5-amino-1-(5-phospho-beta-D-ribosyl)imidazole-4-carboxamide + L-glutamate + H(+). The enzyme catalyses L-glutamine + H2O = L-glutamate + NH4(+). Its pathway is amino-acid biosynthesis; L-histidine biosynthesis; L-histidine from 5-phospho-alpha-D-ribose 1-diphosphate: step 5/9. Functionally, IGPS catalyzes the conversion of PRFAR and glutamine to IGP, AICAR and glutamate. The HisH subunit catalyzes the hydrolysis of glutamine to glutamate and ammonia as part of the synthesis of IGP and AICAR. The resulting ammonia molecule is channeled to the active site of HisF. This Chlorobium chlorochromatii (strain CaD3) protein is Imidazole glycerol phosphate synthase subunit HisH.